A 171-amino-acid chain; its full sequence is Ribosome maturation factor RimM (171 aa).

Positions 94–168 (NDEFYKDELI…MTIVPPEIVG (75 aa)) constitute a PRC barrel domain.

This sequence belongs to the RimM family. In terms of assembly, binds ribosomal protein uS19.

It localises to the cytoplasm. In terms of biological role, an accessory protein needed during the final step in the assembly of 30S ribosomal subunit, possibly for assembly of the head region. Essential for efficient processing of 16S rRNA. May be needed both before and after RbfA during the maturation of 16S rRNA. It has affinity for free ribosomal 30S subunits but not for 70S ribosomes. The sequence is that of Ribosome maturation factor RimM from Anaplasma phagocytophilum (strain HZ).